Here is a 403-residue protein sequence, read N- to C-terminus: MKAVGIVVEYNPFHNGHAYHLTQAKKVAKADIVIAVMSGTFLQRGEPAMVDKWTRTKMALAGGVDIVIELPYVYSTAPATDFAKGAISILTAVGCDSFAFGSEDGSIQPFLNTYDLIDNNRTEYDALIKDSLKTGASYPKSLYYAYEQLTQKFPAPYIDLAQPNNILGFHYLEAARTLDSNIKPLTIPRIAAGYHDALKQDSSIASATGIRKALASTSSLQSVQKVVPETSFDYLTDWHRHYKKFASWESFWPLLQFTIMRHTPSELTRYAEVTEGIENAIMKAAKNSSSFNSFMEKIKSKRYTWTRIQRMITHIYTGFTKEQLQSFEAPSFIRLLGMSAKGQAYLGKRKKDIELPLISRVAAANDAMLAIDIHAAELYNLSIEQGVTAQSLPKDYQTPPIRN.

ATP-binding positions include 7 to 20 (VVEY…HAYH), G101, N164, and 189 to 190 (RI).

The protein belongs to the TmcAL family.

Its subcellular location is the cytoplasm. The catalysed reaction is cytidine(34) in elongator tRNA(Met) + acetate + ATP = N(4)-acetylcytidine(34) in elongator tRNA(Met) + AMP + diphosphate. In terms of biological role, catalyzes the formation of N(4)-acetylcytidine (ac(4)C) at the wobble position of elongator tRNA(Met), using acetate and ATP as substrates. First activates an acetate ion to form acetyladenylate (Ac-AMP) and then transfers the acetyl group to tRNA to form ac(4)C34. The sequence is that of tRNA(Met) cytidine acetate ligase from Lysinibacillus sphaericus (strain C3-41).